The following is a 307-amino-acid chain: Methionyl-tRNA formyltransferase (307 aa).

Ser-108–Pro-111 contacts (6S)-5,6,7,8-tetrahydrofolate.

The protein belongs to the Fmt family.

The catalysed reaction is L-methionyl-tRNA(fMet) + (6R)-10-formyltetrahydrofolate = N-formyl-L-methionyl-tRNA(fMet) + (6S)-5,6,7,8-tetrahydrofolate + H(+). In terms of biological role, attaches a formyl group to the free amino group of methionyl-tRNA(fMet). The formyl group appears to play a dual role in the initiator identity of N-formylmethionyl-tRNA by promoting its recognition by IF2 and preventing the misappropriation of this tRNA by the elongation apparatus. This is Methionyl-tRNA formyltransferase from Xylella fastidiosa (strain 9a5c).